Consider the following 229-residue polypeptide: Molybdenum transport system permease protein ModB (229 aa).

The 209-residue stretch at 6 to 214 folds into the ABC transmembrane type-1 domain; sequence INLSLSVAVS…LISLLLSEWL (209 aa). The next 5 helical transmembrane spans lie at 12–32, 45–65, 83–103, 132–152, and 196–216; these read VAVS…WLLA, VIHL…LVAM, FGFS…PLVV, FFTI…VLGF, and LCLF…WLSK.

This sequence belongs to the binding-protein-dependent transport system permease family. CysTW subfamily.

It is found in the cell inner membrane. In terms of biological role, part of the binding-protein-dependent transport system for molybdenum; probably responsible for the translocation of the substrate across the membrane. The protein is Molybdenum transport system permease protein ModB (modB) of Haemophilus influenzae (strain ATCC 51907 / DSM 11121 / KW20 / Rd).